Here is a 247-residue protein sequence, read N- to C-terminus: tRNA (guanine-N(1)-)-methyltransferase (247 aa).

S-adenosyl-L-methionine-binding positions include G112 and 131-136 (LGDFVL).

This sequence belongs to the RNA methyltransferase TrmD family. Homodimer.

Its subcellular location is the cytoplasm. It catalyses the reaction guanosine(37) in tRNA + S-adenosyl-L-methionine = N(1)-methylguanosine(37) in tRNA + S-adenosyl-L-homocysteine + H(+). Its function is as follows. Specifically methylates guanosine-37 in various tRNAs. The sequence is that of tRNA (guanine-N(1)-)-methyltransferase from Syntrophotalea carbinolica (strain DSM 2380 / NBRC 103641 / GraBd1) (Pelobacter carbinolicus).